We begin with the raw amino-acid sequence, 727 residues long: Probable copper-importing P-type ATPase A (727 aa).

Over 1–94 (MATNTKMETF…QTYLRKMKFD (94 aa)) the chain is Cytoplasmic. The HMA domain occupies 6–70 (KMETFVITGM…SVENIGYGAI (65 aa)). Positions 17 and 20 each coordinate Cu(+). Residues 95 to 115 (LIFSAILTLPLMLAMIAMMLG) form a helical membrane-spanning segment. Residues 116–119 (SHGP) lie on the Extracellular side of the membrane. The helical transmembrane segment at 120–137 (IVSFFHLSLVQLLFALPV) threads the bilayer. The Cytoplasmic portion of the chain corresponds to 138–161 (QFYVGWRFYKGAYHALKTKAPNMD). A helical transmembrane segment spans residues 162–181 (VLVAIGTSAAFALSIYNGFF). Over 182 to 187 (PSHSHD) the chain is Extracellular. Residues 188–203 (LYFESSSMIITLILLG) form a helical membrane-spanning segment. Topologically, residues 204–341 (KYLEHTAKSK…PIQQIADKIS (138 aa)) are cytoplasmic. The helical transmembrane segment at 342–362 (GIFVPIVLFLALVTLLVTGWL) threads the bilayer. Residues 363–375 (TKDWQLALLHSVS) are Extracellular-facing. Residues 376–396 (VLVIACPCALGLATPTAIMVG) form a helical membrane-spanning segment. Residues 397–678 (TGVGAHNGIL…AATLKKIKQN (282 aa)) lie on the Cytoplasmic side of the membrane. Asp425 (4-aspartylphosphate intermediate) is an active-site residue. Asp621 and Asp625 together coordinate Mg(2+). A helical transmembrane segment spans residues 679–698 (LFWAFIYNTIGIPFAAFGFL). Topologically, residues 699–700 (NP) are extracellular. Residues 701-721 (IIAGGAMAFSSISVLLNSLSL) traverse the membrane as a helical segment. At 722 to 727 (NRKTIK) the chain is on the cytoplasmic side.

This sequence belongs to the cation transport ATPase (P-type) (TC 3.A.3) family. Type IB subfamily. In terms of assembly, monomer. Interacts with the copper chaperone CopZ.

Its subcellular location is the cell membrane. The catalysed reaction is Cu(+)(in) + ATP + H2O = Cu(+)(out) + ADP + phosphate + H(+). Inhibited by vanadate. In terms of biological role, probably involved in copper import under copper limiting conditions. The chain is Probable copper-importing P-type ATPase A (copA) from Enterococcus hirae (strain ATCC 9790 / DSM 20160 / JCM 8729 / LMG 6399 / NBRC 3181 / NCIMB 6459 / NCDO 1258 / NCTC 12367 / WDCM 00089 / R).